A 328-amino-acid polypeptide reads, in one-letter code: L-lactate dehydrogenase (328 aa).

NAD(+) contacts are provided by residues V18, E39, K46, Y71, and 85-86 (GA). Residues Q88 and R94 each coordinate substrate. Residues S107, 124 to 126 (AAN), and S149 contribute to the NAD(+) site. 126-129 (NPVD) lines the substrate pocket. Residue 154–157 (DSAR) coordinates substrate. 2 residues coordinate beta-D-fructose 1,6-bisphosphate: R159 and H174. H181 acts as the Proton acceptor in catalysis. Y226 carries the phosphotyrosine modification. A substrate-binding site is contributed by T235.

The protein belongs to the LDH/MDH superfamily. LDH family. In terms of assembly, homotetramer.

It is found in the cytoplasm. It carries out the reaction (S)-lactate + NAD(+) = pyruvate + NADH + H(+). It functions in the pathway fermentation; pyruvate fermentation to lactate; (S)-lactate from pyruvate: step 1/1. Its activity is regulated as follows. Allosterically activated by fructose 1,6-bisphosphate (FBP). In terms of biological role, catalyzes the conversion of lactate to pyruvate. The sequence is that of L-lactate dehydrogenase from Streptococcus thermophilus (strain CNRZ 1066).